Reading from the N-terminus, the 388-residue chain is Formate-dependent phosphoribosylglycinamide formyltransferase (388 aa).

Residues 21–22 (EL) and E81 contribute to the N(1)-(5-phospho-beta-D-ribosyl)glycinamide site. ATP-binding positions include R113, K154, 159-164 (SSGHGQ), 193-196 (EEFI), and E201. Residues 118-306 (KFAAEELGLK…EFALHVRAVL (189 aa)) enclose the ATP-grasp domain. The Mg(2+) site is built by E265 and E277. N(1)-(5-phospho-beta-D-ribosyl)glycinamide is bound by residues D284, K352, and 359–360 (RR).

It belongs to the PurK/PurT family. In terms of assembly, homodimer.

The enzyme catalyses N(1)-(5-phospho-beta-D-ribosyl)glycinamide + formate + ATP = N(2)-formyl-N(1)-(5-phospho-beta-D-ribosyl)glycinamide + ADP + phosphate + H(+). It functions in the pathway purine metabolism; IMP biosynthesis via de novo pathway; N(2)-formyl-N(1)-(5-phospho-D-ribosyl)glycinamide from N(1)-(5-phospho-D-ribosyl)glycinamide (formate route): step 1/1. Its function is as follows. Involved in the de novo purine biosynthesis. Catalyzes the transfer of formate to 5-phospho-ribosyl-glycinamide (GAR), producing 5-phospho-ribosyl-N-formylglycinamide (FGAR). Formate is provided by PurU via hydrolysis of 10-formyl-tetrahydrofolate. The chain is Formate-dependent phosphoribosylglycinamide formyltransferase from Nitratiruptor sp. (strain SB155-2).